The sequence spans 921 residues: Probable serine/threonine-protein kinase DDB_G0275165 (921 aa).

In terms of domain architecture, Protein kinase spans 23–277 (FDPLSIIGSG…SNILGLLEYI (255 aa)). Residues 29–37 (IGSGGFGKV) and Lys-50 contribute to the ATP site. Catalysis depends on Asp-147, which acts as the Proton acceptor. Disordered stretches follow at residues 289-453 (DYEP…SFPR), 465-492 (RGEE…NEED), 530-571 (RPWN…SDSN), 583-653 (NPTP…PTTI), 671-698 (STAT…SNNN), 737-813 (IQPL…SRSL), 833-858 (SSQQ…TSQF), and 877-921 (FEKS…KPKK). 3 stretches are compositionally biased toward low complexity: residues 310-352 (NNNN…NNNN), 400-412 (SNIN…NNSN), and 429-445 (NING…NNNN). Composition is skewed to low complexity over residues 539–550 (NNNNKNNNNNEK) and 583–638 (NPTP…SLSS). A compositionally biased stretch (polar residues) spans 643–653 (PQSTYKVPTTI). 3 stretches are compositionally biased toward low complexity: residues 748–775 (TVAA…PTST), 842–857 (QPSS…PTSQ), and 892–910 (TSSS…PSSP).

The protein belongs to the protein kinase superfamily. TKL Ser/Thr protein kinase family.

It carries out the reaction L-seryl-[protein] + ATP = O-phospho-L-seryl-[protein] + ADP + H(+). The catalysed reaction is L-threonyl-[protein] + ATP = O-phospho-L-threonyl-[protein] + ADP + H(+). The protein is Probable serine/threonine-protein kinase DDB_G0275165 of Dictyostelium discoideum (Social amoeba).